The following is a 777-amino-acid chain: Zygote defective protein 12 (777 aa).

Composition is skewed to basic and acidic residues over residues 1–10 (MLDLTNKESE) and 18–36 (KYED…PFKE). The disordered stretch occupies residues 1–36 (MLDLTNKESESSDNGNSKYEDSIDGREVGTSKPFKE). The segment at 1-234 (MLDLTNKESE…ESSGKLNGNG (234 aa)) is interaction with dli-1. The region spanning 44–169 (QADLADMAVW…VTLAHIGKNA (126 aa)) is the Calponin-homology (CH) domain. Disordered stretches follow at residues 217–242 (QSEL…RSNA) and 273–292 (SFET…DISI). Residues 218 to 235 (SELNSLSESSGKLNGNGS) show a composition bias toward low complexity. Coiled-coil stretches lie at residues 236–399 (SERR…HHVK) and 425–688 (NTEL…QENR). Residues 273-288 (SFETAQHDMSSNSESG) are compositionally biased toward polar residues. The chain crosses the membrane as a helical span at residues 747 to 767 (AMASILVLGFLVFIAWMFINI). Positions 749–777 (ASILVLGFLVFIAWMFININSALNAPPNA) are interaction with unc-84.

This sequence belongs to the hook family. Homodimer. Interacts with the dynein subunit dli-1 via its N-terminus. May interact with microtubules. Interacts with sut-2. Interacts (via C-terminus) with unc-84 (via C-terminus); the interaction is direct. Expressed in the syncytial gonad, oocytes, and in all cells during the development of the early embryo.

It is found in the nucleus membrane. The protein localises to the cytoplasm. The protein resides in the cytoskeleton. It localises to the microtubule organizing center. Its subcellular location is the centrosome. Cytoskeletal linker protein, which is essential for attachment of the centrosome to the nucleus. Required for dynein localization to the nuclear envelope. Forms a LINC (LInker of Nucleoskeleton and Cytoskeleton) complex together with unc-84, that may be involved in DNA damage repair. This Caenorhabditis elegans protein is Zygote defective protein 12.